The sequence spans 241 residues: Ribonuclease HII (241 aa).

Positions 57–241 constitute an RNase H type-2 domain; sequence NFIAGVDEAG…RTYVEKILKG (185 aa). A divalent metal cation contacts are provided by Asp63, Glu64, and Asp155.

The protein belongs to the RNase HII family. Requires Mn(2+) as cofactor. Mg(2+) is required as a cofactor.

Its subcellular location is the cytoplasm. It carries out the reaction Endonucleolytic cleavage to 5'-phosphomonoester.. Endonuclease that specifically degrades the RNA of RNA-DNA hybrids. In Caldanaerobacter subterraneus subsp. tengcongensis (strain DSM 15242 / JCM 11007 / NBRC 100824 / MB4) (Thermoanaerobacter tengcongensis), this protein is Ribonuclease HII.